A 406-amino-acid chain; its full sequence is CinA-like protein (406 aa).

The protein belongs to the CinA family.

This Thermomicrobium roseum (strain ATCC 27502 / DSM 5159 / P-2) protein is CinA-like protein.